Reading from the N-terminus, the 243-residue chain is Probable transcriptional regulatory protein PTH_1024 (243 aa).

It belongs to the TACO1 family.

It is found in the cytoplasm. The sequence is that of Probable transcriptional regulatory protein PTH_1024 from Pelotomaculum thermopropionicum (strain DSM 13744 / JCM 10971 / SI).